Here is a 249-residue protein sequence, read N- to C-terminus: 1-(5-phosphoribosyl)-5-[(5-phosphoribosylamino)methylideneamino] imidazole-4-carboxamide isomerase (249 aa).

D8 (proton acceptor) is an active-site residue. The Proton donor role is filled by D129.

Belongs to the HisA/HisF family.

Its subcellular location is the cytoplasm. The catalysed reaction is 1-(5-phospho-beta-D-ribosyl)-5-[(5-phospho-beta-D-ribosylamino)methylideneamino]imidazole-4-carboxamide = 5-[(5-phospho-1-deoxy-D-ribulos-1-ylimino)methylamino]-1-(5-phospho-beta-D-ribosyl)imidazole-4-carboxamide. Its pathway is amino-acid biosynthesis; L-histidine biosynthesis; L-histidine from 5-phospho-alpha-D-ribose 1-diphosphate: step 4/9. In Rhizobium rhizogenes (strain K84 / ATCC BAA-868) (Agrobacterium radiobacter), this protein is 1-(5-phosphoribosyl)-5-[(5-phosphoribosylamino)methylideneamino] imidazole-4-carboxamide isomerase.